The sequence spans 615 residues: 1-deoxy-D-xylulose-5-phosphate synthase (615 aa).

Residues His76 and 117-119 contribute to the thiamine diphosphate site; that span reads GHS. Asp148 contacts Mg(2+). Thiamine diphosphate is bound by residues 149–150, Asn177, Tyr284, and Glu365; that span reads GA. A Mg(2+)-binding site is contributed by Asn177.

It belongs to the transketolase family. DXPS subfamily. As to quaternary structure, homodimer. It depends on Mg(2+) as a cofactor. Thiamine diphosphate is required as a cofactor.

The catalysed reaction is D-glyceraldehyde 3-phosphate + pyruvate + H(+) = 1-deoxy-D-xylulose 5-phosphate + CO2. It participates in metabolic intermediate biosynthesis; 1-deoxy-D-xylulose 5-phosphate biosynthesis; 1-deoxy-D-xylulose 5-phosphate from D-glyceraldehyde 3-phosphate and pyruvate: step 1/1. In terms of biological role, catalyzes the acyloin condensation reaction between C atoms 2 and 3 of pyruvate and glyceraldehyde 3-phosphate to yield 1-deoxy-D-xylulose-5-phosphate (DXP). The chain is 1-deoxy-D-xylulose-5-phosphate synthase from Francisella tularensis subsp. holarctica (strain FTNF002-00 / FTA).